Reading from the N-terminus, the 114-residue chain is U17-barytoxin-Tl1a (114 aa).

The N-terminal stretch at 1–20 (MKTIIVFLSLLVLATKFGDA) is a signal peptide. A propeptide spanning residues 21-74 (NEGVNQEQMKEVIQNEFREDFLNEMAAMSLLQQLEAIESTLLEKEADRNSRQKR) is cleaved from the precursor. 3 disulfides stabilise this stretch: Cys75–Cys88, Cys82–Cys93, and Cys87–Cys108.

This sequence belongs to the neurotoxin 14 (magi-1) family. 03 (ICK-30-40) subfamily. Expressed by the venom gland.

The protein localises to the secreted. In terms of biological role, ion channel inhibitor. This is U17-barytoxin-Tl1a from Trittame loki (Brush-footed trapdoor spider).